Here is a 1311-residue protein sequence, read N- to C-terminus: Clustered mitochondria protein homolog (1311 aa).

Residues 1 to 46 (MAATNEVIPTSENPSDVSGSSQKLATEETALANGVDHEEEDSGEAG) are disordered. Residues 7-24 (VIPTSENPSDVSGSSQKL) are compositionally biased toward polar residues. The Clu domain occupies 335-579 (DITRTQENYL…RVTPLDITWM (245 aa)). Disordered stretches follow at residues 629–691 (ERKR…QERI) and 915–965 (QSQT…VNAS). Positions 655–691 (EASKSDEPTENGELAKKADESDKDAEPSKPAADQERI) are enriched in basic and acidic residues. Residues 915–930 (QSQTEAAAAPPTTNGE) are compositionally biased toward polar residues. TPR repeat units lie at residues 1034 to 1067 (ARVY…SERT), 1076 to 1109 (LLNY…WKVV), and 1118 to 1151 (ITTI…CEEV). The segment at 1236–1311 (VSPRVTLGQT…RGGAAAAAGK (76 aa)) is disordered. A compositionally biased stretch (polar residues) spans 1242–1253 (LGQTQLQPQVGQ). The span at 1259–1279 (AGRDSRSSRGLDSRSIDELLK) shows a compositional bias: basic and acidic residues. Over residues 1289-1303 (KNKKRPGRSNPKRRG) the composition is skewed to basic residues.

This sequence belongs to the CLU family. In terms of assembly, may associate with the eukaryotic translation initiation factor 3 (eIF-3) complex.

It is found in the cytoplasm. Its function is as follows. mRNA-binding protein involved in proper cytoplasmic distribution of mitochondria. This Sclerotinia sclerotiorum (strain ATCC 18683 / 1980 / Ss-1) (White mold) protein is Clustered mitochondria protein homolog.